We begin with the raw amino-acid sequence, 262 residues long: Acidic leucine-rich nuclear phosphoprotein 32 family member B (262 aa).

LRR repeat units follow at residues 16-40 (PGEV…LSSD), 43-64 (NLEF…PKLN), 65-87 (KLRK…AERT), and 89-110 (NLTH…EPLK). One can recognise an LRRCT domain in the interval 123 to 161 (CEVTMLINYRESVFTLLPQLTYLDGFDADEQEAPDSDPE). The span at 150 to 233 (ADEQEAPDSD…EDEEDDEADD (84 aa)) shows a compositional bias: acidic residues. A disordered region spans residues 150-262 (ADEQEAPDSD…PEDEEDDEDD (113 aa)). Positions 240–243 (KRKR) match the Nuclear localization signal motif. The segment covering 247–262 (DEGEEDPEDEEDDEDD) has biased composition (acidic residues).

It belongs to the ANP32 family. In terms of assembly, interacts with histones H3 and H4. Interacts with KLF5; this interaction induces promoter region-specific histone incorporation and inhibition of histone acetylation by ANP32B. Post-translationally, directly cleaved by caspase-3/CASP3.

The protein localises to the nucleus. In terms of biological role, multifunctional protein that is involved in the regulation of many processes including cell proliferation, apoptosis, cell cycle progression or transcription. Regulates the proliferation of neuronal stem cells, differentiation of leukemic cells and progression from G1 to S phase of the cell cycle. As negative regulator of caspase-3-dependent apoptosis, may act as an antagonist of ANP32A in regulating tissue homeostasis. Exhibits histone chaperone properties, able to recruit histones to certain promoters, thus regulating the transcription of specific genes. Also plays an essential role in the nucleocytoplasmic transport of specific mRNAs via the uncommon nuclear mRNA export receptor XPO1/CRM1. This chain is Acidic leucine-rich nuclear phosphoprotein 32 family member B (ANP32B), found in Gallus gallus (Chicken).